The chain runs to 347 residues: Probable E3 ubiquitin-protein ligase DTX3 (347 aa).

Residues 111–157 (GGEHPELHRPGPPPLRAAPLLPPGARGLPPPPPPLPPPLPPRLREDA) are disordered. The segment covering 120–151 (PGPPPLRAAPLLPPGARGLPPPPPPLPPPLPP) has biased composition (pro residues). The segment at 164 to 205 (CPICLGEIQNAKTLEKCRHSFCEGCITRALQVKKACPMCGRF) adopts an RING-type zinc-finger fold.

This sequence belongs to the Deltex family. Homodimer. May form a heterodimer with other members of the Deltex family. Interacts with NOTCH1. Strongly expressed in testis and brain. Weakly expressed in kidney.

The protein localises to the cytoplasm. The enzyme catalyses S-ubiquitinyl-[E2 ubiquitin-conjugating enzyme]-L-cysteine + [acceptor protein]-L-lysine = [E2 ubiquitin-conjugating enzyme]-L-cysteine + N(6)-ubiquitinyl-[acceptor protein]-L-lysine.. The protein operates within protein modification; protein ubiquitination. In terms of biological role, regulator of Notch signaling, a signaling pathway involved in cell-cell communications that regulates a broad spectrum of cell-fate determinations. Probably acts both as a positive and negative regulator of Notch, depending on the developmental and cell context. Functions as a ubiquitin ligase protein in vitro, suggesting that it may regulate the Notch pathway via some ubiquitin ligase activity. The polypeptide is Probable E3 ubiquitin-protein ligase DTX3 (Dtx3) (Mus musculus (Mouse)).